Here is an 880-residue protein sequence, read N- to C-terminus: MKQLTGAQIRQMFLDFFQEKGHAVEPSASLVPHEDPSLLWINSGVATLKKYFDGRVIPQNPRITNAQKSIRTNDIENVGKTARHHTFFEMLGNFSIGDYFKEEAITWAWEFLTSDKWIGFDKELLSVTIHPEDEEAFTIWNEKMGVPKERIIRLEENFWDIGEGPSGPNTEIFYDRGEAYGNDFSDPELYPGGENERYLEVWNLVFSQFNHNPDGSYTPLPKKNIDTGMGLERMTSIVQDVPTNFDTDLFMPMIGATETISGEKYRNGDLEKDMAFKVIADHIRTVTFAVGDGALPSNEGRGYVLRRLLRRAVRYSKKLNINRPFMFELVPVVGEVMKDFYPEVLEKKDFIAKVVKNEEERFHETLHDGEAILAEVIAKAKEEKTTVISGVDAFRLYDTYGFPIELTEEYAEEAGMTVDHEGFENEMEKQRERARAARQDVDSMQVQGGVLGEVKVASEFVGYGTVATESNVVALVKNGEYTDSLQVGEEGQLMLDVTPFYAESGGQIADRGYLLADGVKVLVKDVQKAPNGQNLHQVVVEEGTLTKDAAVKAIIDTKNRSSVVKNHTATHLLHQALKDVLGTHVNQAGSLVTSERLRFDFSHFGQVQADELEKIERIVNEKIWESIDVEISQKAIEEAKEMGAMALFGEKYGDVVRVVQVGDYSLELCGGCHVDNTASIGIFKIVAESGIGAGTRRIEAVTGKSAYELMNDQVGLLKEAAGKMKTNPKDILTRVDGLFAEVKQLQKENESLAAKLSNIEAGNLTDSVMTVDGVNVLAAKVNVADMNNLRTMMDDLKNKLESAVVVLASVNDDKVNILAGVTKDLISQGYHAGKLVKEVASRCGGGGGGRPDMAQAGGKNPAQVEEALAFVQEYVKSVSK.

Residues His-567, His-571, Cys-669, and His-673 each contribute to the Zn(2+) site.

It belongs to the class-II aminoacyl-tRNA synthetase family. Zn(2+) is required as a cofactor.

It is found in the cytoplasm. It carries out the reaction tRNA(Ala) + L-alanine + ATP = L-alanyl-tRNA(Ala) + AMP + diphosphate. Catalyzes the attachment of alanine to tRNA(Ala) in a two-step reaction: alanine is first activated by ATP to form Ala-AMP and then transferred to the acceptor end of tRNA(Ala). Also edits incorrectly charged Ser-tRNA(Ala) and Gly-tRNA(Ala) via its editing domain. The polypeptide is Alanine--tRNA ligase (Bacillus thuringiensis (strain Al Hakam)).